The sequence spans 564 residues: Mitochondrial distribution and morphology protein 34-1 (564 aa).

The SMP-LTD domain maps to 1–195 (MAFKFNWSPL…LPAIIHRLSL (195 aa)). Composition is skewed to polar residues over residues 297 to 322 (PDQNDSSASVMSPISPPLSRTQSQTG) and 329 to 352 (DNASTSSAQSRTPTGPTQSFSSYG). 3 disordered regions span residues 297 to 408 (PDQN…VTSA), 414 to 433 (HEQPDDPVTPPLSPESDQSL), and 452 to 473 (DLSSEIVRDRAEPSEPRNPFNT). Positions 359 to 371 (RHSRAHARRRKKR) are enriched in basic residues. The segment covering 383-394 (SDSASVSVSDES) has biased composition (low complexity). Over residues 396–408 (YTESASAPSVTSA) the composition is skewed to polar residues. Over residues 452 to 466 (DLSSEIVRDRAEPSE) the composition is skewed to basic and acidic residues.

It belongs to the MDM34 family. As to quaternary structure, component of the ER-mitochondria encounter structure (ERMES) or MDM complex, composed of mmm1, mdm10, mdm12 and mdm34.

The protein resides in the mitochondrion outer membrane. In terms of biological role, component of the ERMES/MDM complex, which serves as a molecular tether to connect the endoplasmic reticulum (ER) and mitochondria. Components of this complex are involved in the control of mitochondrial shape and protein biogenesis, and function in nonvesicular lipid trafficking between the ER and mitochondria. Mdm34 is required for the interaction of the ER-resident membrane protein mmm1 and the outer mitochondrial membrane-resident beta-barrel protein mdm10. This Penicillium rubens (strain ATCC 28089 / DSM 1075 / NRRL 1951 / Wisconsin 54-1255) (Penicillium chrysogenum) protein is Mitochondrial distribution and morphology protein 34-1.